The primary structure comprises 122 residues: UPF0102 protein Krad_1407 (122 aa).

This sequence belongs to the UPF0102 family.

The polypeptide is UPF0102 protein Krad_1407 (Kineococcus radiotolerans (strain ATCC BAA-149 / DSM 14245 / SRS30216)).